We begin with the raw amino-acid sequence, 1755 residues long: Gag-Pro-Pol polyprotein (1755 aa).

The N-myristoyl glycine; by host moiety is linked to residue Gly2. Basic and acidic residues-rich tracts occupy residues 151–169 and 178–191; these read YDEP…EKDH and QRKE…KEKD. The disordered stretch occupies residues 151 to 191; that stretch reads YDEPYEEKEKADKNEEKDHVRKIKKVVQRKENSEGKRKEKD. Positions 305-308 match the PTAP/PSAP motif motif; it reads PSAP. 2 consecutive CCHC-type zinc fingers follow at residues 525-542 and 552-569; these read PVCF…DCKD and GLCP…ECKS. Positions 572–631 are disordered; it reads DKDGNPLPPLETNAENSKNLVKGQSPSPAQKGDGVKGSGLNPEAPPFTIHDLPRGTPGSA. Residues 584–599 show a composition bias toward polar residues; the sequence is NAENSKNLVKGQSPSP. Residues 766–841 enclose the Peptidase A2 domain; sequence FLGLLDTGAD…LPFTLWGRDI (76 aa). The active-site Protease; shared with dimeric partner is Asp771. The Reverse transcriptase domain occupies 905 to 1093; that stretch reads LQLGHLEESN…DNLKYLGTHI (189 aa). Mg(2+) contacts are provided by Asp970, Asp1045, Asp1046, Asp1316, Glu1346, Asp1366, and Asp1429. An RNase H type-1 domain is found at 1307 to 1437; it reads LEKGIVIFTD…ADSLTRILTA (131 aa). Residues 1436–1477 form an Integrase-type zinc finger; it reads TALESAQESHALHHQNAAALRFQFHITREQAREIVKLCPNCP. Residues His1445, His1449, Cys1473, and Cys1476 each contribute to the Zn(2+) site. Positions 1490 to 1647 constitute an Integrase catalytic domain; it reads RGLKPRVLWQ…TAAERHWGPI (158 aa). Mg(2+) contacts are provided by Asp1501, Asp1558, and Glu1594. Residues 1653 to 1702 constitute a DNA-binding region (integrase-type); the sequence is PMVMWKDLLTGSWKGPDVLITAGRGYACVFPQDAETPIWVPDRFIRPFTE. The disordered stretch occupies residues 1699–1755; that stretch reads PFTERKEATPTPGTAEKTPPRDEKDQQESPKNESSPHQREDGLATSAGVDLRSGGGP. A compositionally biased stretch (basic and acidic residues) spans 1716-1740; it reads TPPRDEKDQQESPKNESSPHQREDG.

The protein belongs to the retroviral Pol polyprotein family. As to quaternary structure, homodimer; when myristoylated. In terms of assembly, homodimer. Homooctamer. As to quaternary structure, homotrimer. Mg(2+) serves as cofactor. Post-translationally, specific enzymatic cleavages in vivo yield mature proteins. In terms of processing, released by autocatalytic processing. Myristoylated. Myristoylation of the matrix (MA) domain mediates the transport and binding of Gag polyproteins to the host plasma membrane and is required for the assembly of viral particles.

It is found in the virion. It carries out the reaction DNA(n) + a 2'-deoxyribonucleoside 5'-triphosphate = DNA(n+1) + diphosphate. The enzyme catalyses Endonucleolytic cleavage to 5'-phosphomonoester.. It catalyses the reaction dUTP + H2O = dUMP + diphosphate + H(+). Inhibited by pepstatin A. Matrix protein. Its function is as follows. Nucleocapsid protein p14: Binds strongly to viral nucleic acids and promote their aggregation. Also destabilizes the nucleic acids duplexes via highly structured zinc-binding motifs. Functionally, capsid protein. In terms of biological role, NC-dUTPase has dUTPase activity, thereby preventing incorporation of uracil into DNA. The aspartyl protease mediates proteolytic cleavages of Gag and Gag-Pol polyproteins during or shortly after the release of the virion from the plasma membrane. Cleavages take place as an ordered, step-wise cascade to yield mature proteins. This process is called maturation. Displays maximal activity during the budding process just prior to particle release from the cell. Its function is as follows. RT is a multifunctional enzyme that converts the viral dimeric RNA genome into dsDNA in the cytoplasm, shortly after virus entry into the cell. This enzyme displays a DNA polymerase activity that can copy either DNA or RNA templates, and a ribonuclease H (RNase H) activity that cleaves the RNA strand of RNA-DNA heteroduplexes in a partially processive 3' to 5' endonucleasic mode. Conversion of viral genomic RNA into dsDNA requires many steps. A tRNA binds to the primer-binding site (PBS) situated at the 5' end of the viral RNA. RT uses the 3' end of the tRNA primer to perfom a short round of RNA-dependent minus-strand DNA synthesis. The reading proceeds through the U5 region and ends after the repeated (R) region which is present at both ends of viral RNA. The portion of the RNA-DNA heteroduplex is digested by the RNase H, resulting in a ssDNA product attached to the tRNA primer. This ssDNA/tRNA hybridizes with the identical R region situated at the 3' end of viral RNA. This template exchange, known as minus-strand DNA strong stop transfer, can be either intra- or intermolecular. RT uses the 3' end of this newly synthesized short ssDNA to perfom the RNA-dependent minus-strand DNA synthesis of the whole template. RNase H digests the RNA template except for a polypurine tract (PPT) situated at the 5' end of the genome. It is not clear if both polymerase and RNase H activities are simultaneous. RNase H probably can proceed both in a polymerase-dependent (RNA cut into small fragments by the same RT performing DNA synthesis) and a polymerase-independent mode (cleavage of remaining RNA fragments by free RTs). Secondly, RT performs DNA-directed plus-strand DNA synthesis using the PPT that has not been removed by RNase H as primers. PPT and tRNA primers are then removed by RNase H. The 3' and 5' ssDNA PBS regions hybridize to form a circular dsDNA intermediate. Strand displacement synthesis by RT to the PBS and PPT ends produces a blunt ended, linear dsDNA copy of the viral genome that includes long terminal repeats (LTRs) at both ends. Functionally, catalyzes viral DNA integration into the host chromosome, by performing a series of DNA cutting and joining reactions. The protein is Gag-Pro-Pol polyprotein (gag-pro-pol) of Mus musculus (Mouse).